The following is a 465-amino-acid chain: Adenosylhomocysteinase (465 aa).

Substrate contacts are provided by Thr56, Asp131, and Glu191. 192–194 serves as a coordination point for NAD(+); it reads TTT. Residues Lys221 and Asp225 each coordinate substrate. Residues Asn226, 255 to 260, Glu278, Asn313, 334 to 336, and Asn379 each bind NAD(+); these read GYGDVG and IGH.

This sequence belongs to the adenosylhomocysteinase family. Requires NAD(+) as cofactor.

Its subcellular location is the cytoplasm. The enzyme catalyses S-adenosyl-L-homocysteine + H2O = L-homocysteine + adenosine. It participates in amino-acid biosynthesis; L-homocysteine biosynthesis; L-homocysteine from S-adenosyl-L-homocysteine: step 1/1. In terms of biological role, may play a key role in the regulation of the intracellular concentration of adenosylhomocysteine. The chain is Adenosylhomocysteinase from Chelativorans sp. (strain BNC1).